The following is a 176-amino-acid chain: Acireductone dioxygenase (176 aa).

Fe(2+) is bound by residues His-81, His-83, Glu-87, and His-126. Ni(2+) is bound by residues His-81, His-83, Glu-87, and His-126.

This sequence belongs to the acireductone dioxygenase (ARD) family. Fe(2+) serves as cofactor. The cofactor is Ni(2+).

It is found in the cytoplasm. Its subcellular location is the nucleus. The enzyme catalyses 1,2-dihydroxy-5-(methylsulfanyl)pent-1-en-3-one + O2 = 4-methylsulfanyl-2-oxobutanoate + formate + 2 H(+). It carries out the reaction 1,2-dihydroxy-5-(methylsulfanyl)pent-1-en-3-one + O2 = 3-(methylsulfanyl)propanoate + CO + formate + 2 H(+). Its pathway is amino-acid biosynthesis; L-methionine biosynthesis via salvage pathway; L-methionine from S-methyl-5-thio-alpha-D-ribose 1-phosphate: step 5/6. Functionally, catalyzes 2 different reactions between oxygen and the acireductone 1,2-dihydroxy-3-keto-5-methylthiopentene (DHK-MTPene) depending upon the metal bound in the active site. Fe-containing acireductone dioxygenase (Fe-ARD) produces formate and 2-keto-4-methylthiobutyrate (KMTB), the alpha-ketoacid precursor of methionine in the methionine recycle pathway. Ni-containing acireductone dioxygenase (Ni-ARD) produces methylthiopropionate, carbon monoxide and formate, and does not lie on the methionine recycle pathway. The sequence is that of Acireductone dioxygenase (adi1) from Sclerotinia sclerotiorum (strain ATCC 18683 / 1980 / Ss-1) (White mold).